The following is a 351-amino-acid chain: MEIHEHIIELPKKVYVGNGILSKLRDYLFQLNVLEPVLVVTGPNVRKIVIDEVAKGLNEIGKIEFIEVLDSSIDEVNRVEEKAKQLNPKFVLGIGGGKTIDVAKYVAYKLNVNFISIPTAPSHDGITSPFASIKGLGKPVSVKAKMPYAIIADINVLSSAPRRLINSGIGDTIGKLVAVRDWKLASKLTGEYYGDYTASLALLSAKHALSCTRIIHRDLKYSVSLLTEALISSGVAMGMAGSTRPASGSEHLFAHAVDLLQPNAALHGELVGMGSIIMAYIHGINWREIRNALDRIGAPTTAKQLGIPNDVIIKALTIAHTIRPERYTILGDRGLTWASAEKVARDTGVIE.

NAD(+) is bound by residues 97-101 (GKTID) and 119-122 (TAPS). Asp124 is a substrate binding site. Residue Ser128 coordinates NAD(+). Asp171 provides a ligand contact to substrate. Zn(2+) contacts are provided by Asp171 and His251. His255 provides a ligand contact to substrate. His267 is a Zn(2+) binding site.

It belongs to the glycerol-1-phosphate dehydrogenase family. Homodimer. Zn(2+) serves as cofactor.

The protein resides in the cytoplasm. It carries out the reaction sn-glycerol 1-phosphate + NAD(+) = dihydroxyacetone phosphate + NADH + H(+). The catalysed reaction is sn-glycerol 1-phosphate + NADP(+) = dihydroxyacetone phosphate + NADPH + H(+). The protein operates within membrane lipid metabolism; glycerophospholipid metabolism. Catalyzes the NAD(P)H-dependent reduction of dihydroxyacetonephosphate (DHAP or glycerone phosphate) to glycerol 1-phosphate (G1P). The G1P thus generated is used as the glycerophosphate backbone of phospholipids in the cellular membranes of Archaea. This is Glycerol-1-phosphate dehydrogenase [NAD(P)+] from Metallosphaera sedula (strain ATCC 51363 / DSM 5348 / JCM 9185 / NBRC 15509 / TH2).